We begin with the raw amino-acid sequence, 181 residues long: Transcriptional repressor NrdR (181 aa).

A zinc finger lies at 3 to 34 (CLFCQHTDTRVIDSRVSEDGATIRRRRECEAC). Residues 49–139 (PVIIKKDGGR…VYRSFQDVAD (91 aa)) form the ATP-cone domain.

The protein belongs to the NrdR family. It depends on Zn(2+) as a cofactor.

Functionally, negatively regulates transcription of bacterial ribonucleotide reductase nrd genes and operons by binding to NrdR-boxes. The sequence is that of Transcriptional repressor NrdR from Xylella fastidiosa (strain M12).